The primary structure comprises 736 residues: Copper-exporting P-type ATPase (736 aa).

Basic residues predominate over residues 1 to 17 (MKHDHHQGHTHSGKGHA). Residues 1–32 (MKHDHHQGHTHSGKGHACHHEHNSPKTQQASS) are disordered. A run of 6 helical transmembrane segments spans residues 85 to 105 (FWIALMLTIPVVILEMGGHGL), 114 to 134 (SSWIQLLLATPVVLWGGWPFF), 149 to 169 (FTLIAMGIGVAWIYSMVAVLW), 183 to 203 (VVAVYFEAAAVITTLVLLGQV), 341 to 361 (GWFVPAVILVAVLSFIVWALL), and 369 to 389 (YGLIAAVSVLIIACPCALGLA). The 4-aspartylphosphate intermediate role is filled by Asp-426. Asp-426, Thr-428, and Asp-624 together coordinate Mg(2+). Transmembrane regions (helical) follow at residues 682–702 (LFFAFIYNVLGVPLAAGVLYP) and 706–726 (LLLSPMIAAAAMALSSVSVII).

The protein belongs to the cation transport ATPase (P-type) (TC 3.A.3) family. Type IB subfamily. Mg(2+) serves as cofactor.

It localises to the cell inner membrane. The catalysed reaction is Cu(+)(in) + ATP + H2O = Cu(+)(out) + ADP + phosphate + H(+). Activated by phospholipids, Mg(2+) and Cu(+). Functionally, couples the hydrolysis of ATP with the export of copper. The chain is Copper-exporting P-type ATPase from Legionella pneumophila subsp. pneumophila (strain Philadelphia 1 / ATCC 33152 / DSM 7513).